The chain runs to 273 residues: Formamidopyrimidine-DNA glycosylase (273 aa).

Pro-2 functions as the Schiff-base intermediate with DNA in the catalytic mechanism. The active-site Proton donor is the Glu-3. Lys-59 (proton donor; for beta-elimination activity) is an active-site residue. DNA is bound by residues His-93, Arg-111, and Arg-154. The FPG-type zinc-finger motif lies at 239 to 273 (KVYGRGGEPCKECGHTLVRIRLAGRSTVFCPCCQV). The active-site Proton donor; for delta-elimination activity is the Arg-263.

It belongs to the FPG family. In terms of assembly, monomer. The cofactor is Zn(2+).

The catalysed reaction is Hydrolysis of DNA containing ring-opened 7-methylguanine residues, releasing 2,6-diamino-4-hydroxy-5-(N-methyl)formamidopyrimidine.. It catalyses the reaction 2'-deoxyribonucleotide-(2'-deoxyribose 5'-phosphate)-2'-deoxyribonucleotide-DNA = a 3'-end 2'-deoxyribonucleotide-(2,3-dehydro-2,3-deoxyribose 5'-phosphate)-DNA + a 5'-end 5'-phospho-2'-deoxyribonucleoside-DNA + H(+). Functionally, involved in base excision repair of DNA damaged by oxidation or by mutagenic agents. Acts as a DNA glycosylase that recognizes and removes damaged bases. Has a preference for oxidized purines, such as 7,8-dihydro-8-oxoguanine (8-oxoG). Has AP (apurinic/apyrimidinic) lyase activity and introduces nicks in the DNA strand. Cleaves the DNA backbone by beta-delta elimination to generate a single-strand break at the site of the removed base with both 3'- and 5'-phosphates. The protein is Formamidopyrimidine-DNA glycosylase of Desulfitobacterium hafniense (strain DSM 10664 / DCB-2).